The sequence spans 792 residues: Protocadherin beta-18 (792 aa).

Positions 1–26 (MAARGSCVSRQRQVLFLFLLGGLCLA) are cleaved as a signal peptide. Cadherin domains lie at 27-133 (GSEL…SPIF), 134-242 (QDKK…APQF), 243-347 (PQEL…APEL), 348-451 (IMSS…APAF), 452-561 (NQTS…APFV), and 568-676 (ASAP…LPEV). Residue N169 is glycosylated (N-linked (GlcNAc...) asparagine). Residues N418 and N452 are each glycosylated (N-linked (GlcNAc...) asparagine). A helical membrane pass occupies residues 693–713 (VIALASVSSLFLLSVLLFVGV).

Its subcellular location is the cell membrane. Potential calcium-dependent cell-adhesion protein. This Mus musculus (Mouse) protein is Protocadherin beta-18 (Pcdhb18).